Here is a 336-residue protein sequence, read N- to C-terminus: MAQARENVSLFFKLYCLAVMTLVAAAYTVALRYTRTTAKELYFSTTAVCVTEVIKLLISVGLLAKETGSLGRFKASLSENVLGSPKELMKLSVPSLVYAVQNNMAFLALSNLDAAVYQVTYQLKIPCTALCTVLMLNRTLSKLQWVSVFMLCGGVILVQWKPAQATKVVVEQSPLLGFGAIAIAVLCSGFAGVYFEKVLKSSDTSLWVRNIQMYLSGIVVTLVGTYLSDGAEIKEKGFFYGYTYYVWFVIFLASVGGLYTSVVVKYTDNIMKGFSAAAAIVLSTIASVMLFGLQITLSFAMGALLVCISIYLYGLPRQDTTCIQQEATSKERVIGV.

Topologically, residues 1–9 (MAQARENVS) are cytoplasmic. The helical transmembrane segment at 10–30 (LFFKLYCLAVMTLVAAAYTVA) threads the bilayer. Residues 31–45 (LRYTRTTAKELYFST) are Lumenal-facing. A helical membrane pass occupies residues 46–64 (TAVCVTEVIKLLISVGLLA). A CMP-N-acetyl-beta-neuraminate-binding site is contributed by K55. The Cytoplasmic segment spans residues 65-87 (KETGSLGRFKASLSENVLGSPKE). The chain crosses the membrane as a helical span at residues 88 to 108 (LMKLSVPSLVYAVQNNMAFLA). A CMP-N-acetyl-beta-neuraminate-binding site is contributed by 101 to 102 (QN). Residues 109–114 (LSNLDA) are Lumenal-facing. A helical membrane pass occupies residues 115–135 (AVYQVTYQLKIPCTALCTVLM). 117–124 (YQVTYQLK) serves as a coordination point for CMP-N-acetyl-beta-neuraminate. Residues 136–141 (LNRTLS) are Cytoplasmic-facing. A helical transmembrane segment spans residues 142-160 (KLQWVSVFMLCGGVILVQW). Topologically, residues 161–175 (KPAQATKVVVEQSPL) are lumenal. Residues 176 to 196 (LGFGAIAIAVLCSGFAGVYFE) form a helical membrane-spanning segment. Position 188 (S188) interacts with CMP-N-acetyl-beta-neuraminate. The Cytoplasmic segment spans residues 197–209 (KVLKSSDTSLWVR). 210–214 (NIQMY) lines the CMP-N-acetyl-beta-neuraminate pocket. A helical membrane pass occupies residues 210–228 (NIQMYLSGIVVTLVGTYLS). The Lumenal segment spans residues 229 to 243 (DGAEIKEKGFFYGYT). Residues 244–262 (YYVWFVIFLASVGGLYTSV) form a helical membrane-spanning segment. Residues 263-269 (VVKYTDN) lie on the Cytoplasmic side of the membrane. A helical membrane pass occupies residues 270–288 (IMKGFSAAAAIVLSTIASV). Residue K272 participates in CMP-N-acetyl-beta-neuraminate binding. Topologically, residues 289-296 (MLFGLQIT) are lumenal. A helical transmembrane segment spans residues 297–315 (LSFAMGALLVCISIYLYGL). The Cytoplasmic segment spans residues 316-336 (PRQDTTCIQQEATSKERVIGV). A disordered region spans residues 316–336 (PRQDTTCIQQEATSKERVIGV).

Belongs to the nucleotide-sugar transporter family. SLC35A subfamily. As to quaternary structure, monomer.

It localises to the golgi apparatus membrane. It carries out the reaction CMP-N-acetyl-beta-neuraminate(in) + CMP(out) = CMP-N-acetyl-beta-neuraminate(out) + CMP(in). The catalysed reaction is CMP-N-acetyl-beta-neuraminate(in) + AMP(out) = CMP-N-acetyl-beta-neuraminate(out) + AMP(in). The enzyme catalyses CDP-L-ribitol(in) + CDP(out) = CDP-L-ribitol(out) + CDP(in). It catalyses the reaction UMP(out) + CMP-N-acetyl-beta-neuraminate(in) = UMP(in) + CMP-N-acetyl-beta-neuraminate(out). In terms of biological role, transports CMP-sialic acid from the cytosol into the Golgi apparatus, functioning as an antiporter that exchanges CMP-sialic acid for CMP. Binds both CMP-sialic acid and free CMP, but has higher affinity for free CMP. Also able to exchange CMP-sialic acid for AMP and UMP. Also mediates the transport of CDP-ribitol. This Cricetulus griseus (Chinese hamster) protein is CMP-sialic acid transporter (SLC35A1).